A 267-amino-acid chain; its full sequence is Protein LicA (267 aa).

It belongs to the peptidase S49 family.

Mediates phase variation of the LPS epitopes. Phase variation of H.influenza LPS epitopes expressed by LicA is determined by a translational switch. This chain is Protein LicA (licA), found in Haemophilus influenzae (strain ATCC 51907 / DSM 11121 / KW20 / Rd).